The following is a 1639-amino-acid chain: Merozoite surface protein 1 (1639 aa).

The N-terminal stretch at 1–19 (MKIIFFLCSFLFFIINTQC) is a signal peptide. 2 stretches are compositionally biased toward polar residues: residues 58–67 (SGTAVTTSTP) and 107–119 (NSRRTNPSDNSSD). 2 disordered regions span residues 58–78 (SGTAVTTSTPGSKGSVASGGS) and 94–122 (VASGGSVASGGSGNSRRTNPSDNSSDSDA). N-linked (GlcNAc...) asparagine glycans are attached at residues N116 and N268. The segment at 689–764 (KKNIKTEGQS…VPTPPAPVNN (76 aa)) is disordered. Composition is skewed to polar residues over residues 694-704 (TEGQSDNSEPS) and 711-722 (GQATTKPGQQAG). Over residues 730–741 (VQAQAQEQKQAQ) the composition is skewed to low complexity. 4 N-linked (GlcNAc...) asparagine glycosylation sites follow: N764, N768, N783, and N844. A disordered region spans residues 893–915 (SMQPLSLTPQDKPEVSANDDTSH). Residues N920, N964, N1058, N1165, and N1174 are each glycosylated (N-linked (GlcNAc...) asparagine). Positions 1002-1116 (QLSFDLYNKY…EESIQTEDNY (115 aa)) are required for binding to host erythrocyte cell membrane. The span at 1199–1212 (VSESGSDTLEQSQP) shows a compositional bias: polar residues. Positions 1199–1229 (VSESGSDTLEQSQPKKPASTHVGAESNTITT) are disordered. N-linked (GlcNAc...) asparagine glycans are attached at residues N1445 and N1526. EGF-like domains lie at 1530-1570 (HQCV…VENP) and 1571-1618 (NPTC…IFCS). Cystine bridges form between C1532–C1543, C1537–C1553, C1555–C1566, C1574–C1587, C1581–C1601, and C1603–C1617. S1618 carries the GPI-anchor amidated serine lipid modification. A propeptide spans 1619–1639 (SSNFLGISFLLILMLILYSFI) (removed in mature form).

As to quaternary structure, forms a complex composed of subunits p83, p30, p38, and p42 which remain non-covalently associated; the complex is formed at the merozoite surface prior to egress from host erythrocytes. Forms a complex composed of processed MSP1 subunits, MSP6 subunit p36 and MSP7; the complex is formed at the merozoite surface prior to egress from host erythrocytes. Within the complex, interacts (via subunit p38) with MSP6 subunit p36 and (via subunits p83, p30 and p38) with MSP7 (via subunit p22). Forms a complex composed of MSP1, MSP6, DBLMSP1 and DBLMSP2. Within the complex, interacts (via subunit p38) with DBLMSP1 and DBLMSP2. Forms a complex composed of MSP1, and rhoptry proteins RhopH3, RAP1 and CLAG9/RhopH3. Within the complex, interacts (via subunits p42 and p19) with RhopH3 (via C-terminus). Forms a complex composed of MSP1, MSP6, MSP7, MSP9 and MSP3; within the complex, MSP6 and MSP9 mediate the binding to the host erythrocyte. Interacts (via subunits p19 and p42) with MSP9; the interaction is direct; MSP1 subunits p19 or p42, and MSP9 form a co-ligand complex that interacts with host SLC4A1/Band 3 protein. May interact with PFD6. Interacts with host spectrin. Interacts with host glycophorin GYPA in a sialic acid-independent manner. In terms of assembly, interacts with host proinflammatory cytokine S100P; the interaction blocks S100P inflammatory and chemotactic activities. As to quaternary structure, interacts with host SLC4A1/Band 3 (via 5ABC region) on the host erythrocyte surface in a sialic acid-independent manner. Post-translationally, the p190 precursor is cleaved by SUB1 prior to merozoite egress into 4 subunits p83, p30, p38, and p42 which remain non-covalently associated. SUB1-mediated proteolytic cleavage occurs in an orderly manner; the first cleavage occurs at the p83/p30 site, followed by cleavage at the p30/p38 site, the last cleavage occurs at the p38/p42 site. The order of cleavage is essential for parasite viability. SUB1-mediated processing is essential for merozoite egress. In a second processing step during erythrocyte invasion, p42 is cleaved by SUB2 into p33 and p19; the latter remains attached to the merozoite surface via its GPI-anchor and stays on the surface during the subsequent ring stage.

The protein resides in the cell membrane. Its subcellular location is the secreted. The protein localises to the vacuole membrane. Functionally, during the asexual blood stage, involved in merozoite egress from host erythrocytes possibly via its interaction with the host cytoskeleton protein spectrin resulting in the destabilization of the host cytoskeleton and thus leading to erythrocyte cell membrane rupture. Involved in the binding to host erythrocytes and is required for host erythrocyte invasion. In terms of biological role, by binding to host proinflammatory cytokine S100P may interfere with host immune responses. Its function is as follows. Involved in merozoite invasion of host erythrocytes. May play a role in the biogenesis and/or function of the food vacuole during the intraerythrocytic development. The chain is Merozoite surface protein 1 from Plasmodium falciparum (isolate Wellcome).